The primary structure comprises 260 residues: Shikimate dehydrogenase (NADP(+)) (260 aa).

Residues 14–16 and threonine 60 each bind shikimate; that span reads SAS. The active-site Proton acceptor is lysine 64. Residues asparagine 85 and aspartate 100 each coordinate shikimate. NADP(+) is bound by residues 121 to 125, 145 to 150, and phenylalanine 201; these read GAGGA and NRTYER. Tyrosine 203 is a binding site for shikimate. Residue glycine 225 participates in NADP(+) binding.

It belongs to the shikimate dehydrogenase family. Homodimer.

The catalysed reaction is shikimate + NADP(+) = 3-dehydroshikimate + NADPH + H(+). It participates in metabolic intermediate biosynthesis; chorismate biosynthesis; chorismate from D-erythrose 4-phosphate and phosphoenolpyruvate: step 4/7. Involved in the biosynthesis of the chorismate, which leads to the biosynthesis of aromatic amino acids. Catalyzes the reversible NADPH linked reduction of 3-dehydroshikimate (DHSA) to yield shikimate (SA). The polypeptide is Shikimate dehydrogenase (NADP(+)) (Pyrobaculum neutrophilum (strain DSM 2338 / JCM 9278 / NBRC 100436 / V24Sta) (Thermoproteus neutrophilus)).